We begin with the raw amino-acid sequence, 508 residues long: GMP synthase [glutamine-hydrolyzing] (508 aa).

Residues 1-189 (MILVLDFGSQ…ALLVCGCEKT (189 aa)) form the Glutamine amidotransferase type-1 domain. Residue Cys78 is the Nucleophile of the active site. Active-site residues include His163 and Glu165. The GMPS ATP-PPase domain occupies 190–383 (WGMQHFAQKE…LGISQDFLMR (194 aa)). Position 217–223 (217–223 (SGGVDST)) interacts with ATP.

As to quaternary structure, homodimer.

It carries out the reaction XMP + L-glutamine + ATP + H2O = GMP + L-glutamate + AMP + diphosphate + 2 H(+). It functions in the pathway purine metabolism; GMP biosynthesis; GMP from XMP (L-Gln route): step 1/1. In terms of biological role, catalyzes the synthesis of GMP from XMP. The sequence is that of GMP synthase [glutamine-hydrolyzing] from Helicobacter pylori (strain Shi470).